A 473-amino-acid chain; its full sequence is Photosystem II CP43 reaction center protein (473 aa).

Residues 1 to 14 constitute a propeptide that is removed on maturation; sequence MKTLYSLRRFYPVE. The residue at position 15 (Thr-15) is an N-acetylthreonine. The residue at position 15 (Thr-15) is a Phosphothreonine. A run of 5 helical transmembrane segments spans residues 69 to 93, 134 to 155, 178 to 200, 255 to 275, and 291 to 312; these read LFEV…PHLA, LLGP…KDRN, KALY…RKIT, KPFA…LSYS, and WFNN…ASQA. Glu-367 contacts [CaMn4O5] cluster. A helical membrane pass occupies residues 447-471; that stretch reads RARAAAAGFEKGIDRDFEPVLSMTP.

This sequence belongs to the PsbB/PsbC family. PsbC subfamily. In terms of assembly, PSII is composed of 1 copy each of membrane proteins PsbA, PsbB, PsbC, PsbD, PsbE, PsbF, PsbH, PsbI, PsbJ, PsbK, PsbL, PsbM, PsbT, PsbX, PsbY, PsbZ, Psb30/Ycf12, at least 3 peripheral proteins of the oxygen-evolving complex and a large number of cofactors. It forms dimeric complexes. Requires Binds multiple chlorophylls and provides some of the ligands for the Ca-4Mn-5O cluster of the oxygen-evolving complex. It may also provide a ligand for a Cl- that is required for oxygen evolution. PSII binds additional chlorophylls, carotenoids and specific lipids. as cofactor.

The protein localises to the plastid. The protein resides in the chloroplast thylakoid membrane. Its function is as follows. One of the components of the core complex of photosystem II (PSII). It binds chlorophyll and helps catalyze the primary light-induced photochemical processes of PSII. PSII is a light-driven water:plastoquinone oxidoreductase, using light energy to abstract electrons from H(2)O, generating O(2) and a proton gradient subsequently used for ATP formation. The sequence is that of Photosystem II CP43 reaction center protein from Drimys granadensis.